The primary structure comprises 265 residues: Shikimate dehydrogenase (NADP(+)) (265 aa).

Residues 15–17 (SKS) and T62 each bind shikimate. K66 (proton acceptor) is an active-site residue. Shikimate-binding residues include N87 and D102. NADP(+) contacts are provided by residues 127–131 (GAGGA), 151–156 (NRTVSR), and M212. Y214 contributes to the shikimate binding site. G234 is a binding site for NADP(+).

This sequence belongs to the shikimate dehydrogenase family. Homodimer.

It carries out the reaction shikimate + NADP(+) = 3-dehydroshikimate + NADPH + H(+). It participates in metabolic intermediate biosynthesis; chorismate biosynthesis; chorismate from D-erythrose 4-phosphate and phosphoenolpyruvate: step 4/7. In terms of biological role, involved in the biosynthesis of the chorismate, which leads to the biosynthesis of aromatic amino acids. Catalyzes the reversible NADPH linked reduction of 3-dehydroshikimate (DHSA) to yield shikimate (SA). The chain is Shikimate dehydrogenase (NADP(+)) from Thiobacillus denitrificans (strain ATCC 25259 / T1).